The sequence spans 339 residues: Phenylalanine--tRNA ligase alpha subunit (339 aa).

Residue glutamate 254 participates in Mg(2+) binding.

This sequence belongs to the class-II aminoacyl-tRNA synthetase family. Phe-tRNA synthetase alpha subunit type 1 subfamily. In terms of assembly, tetramer of two alpha and two beta subunits. The cofactor is Mg(2+).

It is found in the cytoplasm. It carries out the reaction tRNA(Phe) + L-phenylalanine + ATP = L-phenylalanyl-tRNA(Phe) + AMP + diphosphate + H(+). In Clostridium botulinum (strain Langeland / NCTC 10281 / Type F), this protein is Phenylalanine--tRNA ligase alpha subunit.